The chain runs to 179 residues: Large ribosomal subunit protein uL5 (179 aa).

The protein belongs to the universal ribosomal protein uL5 family. As to quaternary structure, part of the 50S ribosomal subunit; part of the 5S rRNA/L5/L18/L25 subcomplex. Contacts the 5S rRNA and the P site tRNA. Forms a bridge to the 30S subunit in the 70S ribosome.

This is one of the proteins that bind and probably mediate the attachment of the 5S RNA into the large ribosomal subunit, where it forms part of the central protuberance. In the 70S ribosome it contacts protein S13 of the 30S subunit (bridge B1b), connecting the 2 subunits; this bridge is implicated in subunit movement. Contacts the P site tRNA; the 5S rRNA and some of its associated proteins might help stabilize positioning of ribosome-bound tRNAs. The chain is Large ribosomal subunit protein uL5 from Verminephrobacter eiseniae (strain EF01-2).